A 220-amino-acid polypeptide reads, in one-letter code: Eukaryotic translation initiation factor 3 subunit B (220 aa).

The segment at 1 to 94 (MPEPIAFDES…LIIELDSAAA (94 aa)) is sufficient for interaction with HCR1 and TIF32. The sufficient for interaction with PIC8 stretch occupies residues 1-220 (MPEPIAFDES…GVQAWGGERI (220 aa)). Residues 37 to 120 (HFVICDGAPI…HRLAVNKLPD (84 aa)) enclose the RRM domain.

Belongs to the eIF-3 subunit B family. In terms of assembly, component of the eukaryotic translation initiation factor 3 (eIF-3) complex.

Its subcellular location is the cytoplasm. In terms of biological role, RNA-binding component of the eukaryotic translation initiation factor 3 (eIF-3) complex, which is involved in protein synthesis of a specialized repertoire of mRNAs and, together with other initiation factors, stimulates binding of mRNA and methionyl-tRNAi to the 40S ribosome. The eIF-3 complex specifically targets and initiates translation of a subset of mRNAs involved in cell proliferation. The sequence is that of Eukaryotic translation initiation factor 3 subunit B (TIF32) from Pichia angusta (Yeast).